Reading from the N-terminus, the 632-residue chain is Chaperone protein HtpG (632 aa).

Residues 1–339 form an a; substrate-binding region; sequence MTQQTMSFQA…SSDLPLNVSR (339 aa). The b stretch occupies residues 340–559; the sequence is EILQESRDVK…DNDMSGYLQR (220 aa). Residues 560-632 are c; it reads MLKAAGQNAP…TNALLLSRAA (73 aa).

Belongs to the heat shock protein 90 family. In terms of assembly, homodimer.

The protein resides in the cytoplasm. In terms of biological role, molecular chaperone. Has ATPase activity. This is Chaperone protein HtpG from Burkholderia thailandensis (strain ATCC 700388 / DSM 13276 / CCUG 48851 / CIP 106301 / E264).